The primary structure comprises 60 residues: Sec-independent protein translocase protein TatA (60 aa).

Residues 1–21 traverse the membrane as a helical segment; that stretch reads MAGLGVTELLIILAIVIVLFG.

The protein belongs to the TatA/E family. In terms of assembly, forms a complex with TatC.

Its subcellular location is the cell membrane. In terms of biological role, part of the twin-arginine translocation (Tat) system that transports large folded proteins containing a characteristic twin-arginine motif in their signal peptide across membranes. TatA could form the protein-conducting channel of the Tat system. The sequence is that of Sec-independent protein translocase protein TatA from Herpetosiphon aurantiacus (strain ATCC 23779 / DSM 785 / 114-95).